The sequence spans 211 residues: Urease accessory protein UreE (211 aa).

Positions 170–211 (EHHGHSHDRGCDHSHSHSHDHDHDHGHVHGPGCGHAPHHRHD) are disordered. Residues 176 to 196 (HDRGCDHSHSHSHDHDHDHGH) are compositionally biased toward basic and acidic residues.

Belongs to the UreE family.

It localises to the cytoplasm. Involved in urease metallocenter assembly. Binds nickel. Probably functions as a nickel donor during metallocenter assembly. The protein is Urease accessory protein UreE of Ralstonia nicotianae (strain ATCC BAA-1114 / GMI1000) (Ralstonia solanacearum).